The sequence spans 397 residues: Odorant receptor 98a (397 aa).

Residues 1 to 43 are Cytoplasmic-facing; sequence MLFNYLRKPNPTNLLTSPDSFRYFEYGMFCMGWHTPATHKIIY. The helical transmembrane segment at 44-64 threads the bilayer; the sequence is YITSCLIFAWCAVYLPIGIII. Over 65–77 the chain is Extracellular; that stretch reads SFKTDINTFTPNE. A helical membrane pass occupies residues 78 to 98; that stretch reads LLTVMQLFFNSVGMPFKVLFF. Topologically, residues 99 to 138 are cytoplasmic; that stretch reads NLYISGFYKAKKLLSEMDKRCTTLKERVEVHQGVVRCNKA. The helical transmembrane segment at 139 to 159 threads the bilayer; it reads YLIYQFIYTAYTISTFLSAAL. At 160 to 192 the chain is on the extracellular side; it reads SGKLPWRIYNPFVDFRESRSSFWKAALNETALM. A glycan (N-linked (GlcNAc...) asparagine) is linked at N187. The chain crosses the membrane as a helical span at residues 193–213; the sequence is LFAVTQTLMSDIYPLLYGLIL. The Cytoplasmic segment spans residues 214–266; the sequence is RVHLKLLRLRVESLCTDSGKSDAENEQDLIKCIKDHNLIIDYAAAIRPAVTRT. The chain crosses the membrane as a helical span at residues 267-287; that stretch reads IFVQFLLIGICLGLSMINLLF. The Extracellular segment spans residues 288-293; it reads FADIWT. A helical membrane pass occupies residues 294 to 314; sequence GLATVAYINGLMVQTFPFCFV. The Cytoplasmic segment spans residues 315-354; it reads CDLLKKDCELLVSAIFHSNWINSSRSYKSSLRYFLKNAQK. A helical transmembrane segment spans residues 355-375; it reads SIAFTAGSIFPISTGSNIKVA. Topologically, residues 376–397 are extracellular; it reads KLAFSVVTFVNQLNIADRLTKN.

Belongs to the insect chemoreceptor superfamily. Heteromeric odorant receptor channel (TC 1.A.69) family. Or2a subfamily. In terms of assembly, interacts with Orco. Complexes exist early in the endomembrane system in olfactory sensory neurons (OSNs), coupling these complexes to the conserved ciliary trafficking pathway. Expressed in olfactory sensory neurons in the antenna.

Its subcellular location is the cell membrane. Its function is as follows. Odorant receptor which mediates acceptance or avoidance behavior, depending on its substrates. The odorant receptor repertoire encodes a large collection of odor stimuli that vary widely in identity, intensity, and duration. May form a complex with Orco to form odorant-sensing units, providing sensitive and prolonged odorant signaling and calcium permeability. This is Odorant receptor 98a (Or98a) from Drosophila melanogaster (Fruit fly).